The chain runs to 289 residues: Phosphatidylglycerol--prolipoprotein diacylglyceryl transferase (289 aa).

A run of 3 helical transmembrane segments spans residues 13 to 33, 61 to 81, and 99 to 119; these read LGPL…LLGW, FILW…VLFY, and GGMS…LFAM. An a 1,2-diacyl-sn-glycero-3-phospho-(1'-sn-glycerol)-binding site is contributed by Arg-144. Helical transmembrane passes span 218-238 and 250-270; these read GVVM…LENV and LGLT…LWLI.

The protein belongs to the Lgt family.

It is found in the cell inner membrane. The enzyme catalyses L-cysteinyl-[prolipoprotein] + a 1,2-diacyl-sn-glycero-3-phospho-(1'-sn-glycerol) = an S-1,2-diacyl-sn-glyceryl-L-cysteinyl-[prolipoprotein] + sn-glycerol 1-phosphate + H(+). It participates in protein modification; lipoprotein biosynthesis (diacylglyceryl transfer). Functionally, catalyzes the transfer of the diacylglyceryl group from phosphatidylglycerol to the sulfhydryl group of the N-terminal cysteine of a prolipoprotein, the first step in the formation of mature lipoproteins. This Phenylobacterium zucineum (strain HLK1) protein is Phosphatidylglycerol--prolipoprotein diacylglyceryl transferase.